A 70-amino-acid polypeptide reads, in one-letter code: Large ribosomal subunit protein eL38 (70 aa).

This sequence belongs to the eukaryotic ribosomal protein eL38 family.

This Artemia franciscana (Brine shrimp) protein is Large ribosomal subunit protein eL38 (RPL38).